A 432-amino-acid chain; its full sequence is D-amino acid dehydrogenase (432 aa).

3–17 (VVILGSGVVGVTSAW) is a binding site for FAD.

Belongs to the DadA oxidoreductase family. It depends on FAD as a cofactor.

It carries out the reaction a D-alpha-amino acid + A + H2O = a 2-oxocarboxylate + AH2 + NH4(+). It functions in the pathway amino-acid degradation; D-alanine degradation; NH(3) and pyruvate from D-alanine: step 1/1. Oxidative deamination of D-amino acids. The sequence is that of D-amino acid dehydrogenase from Salmonella agona (strain SL483).